A 214-amino-acid polypeptide reads, in one-letter code: Thymidylate kinase (214 aa).

10–17 lines the ATP pocket; that stretch reads GPDGAGKT.

It belongs to the thymidylate kinase family.

The catalysed reaction is dTMP + ATP = dTDP + ADP. Functionally, phosphorylation of dTMP to form dTDP in both de novo and salvage pathways of dTTP synthesis. The sequence is that of Thymidylate kinase from Levilactobacillus brevis (strain ATCC 367 / BCRC 12310 / CIP 105137 / JCM 1170 / LMG 11437 / NCIMB 947 / NCTC 947) (Lactobacillus brevis).